Here is a 358-residue protein sequence, read N- to C-terminus: 3-isopropylmalate dehydrogenase (358 aa).

77–90 (GPKWTHLPPDQQPE) provides a ligand contact to NAD(+). R98, R108, R137, and D226 together coordinate substrate. Residues D226, D250, and D254 each coordinate Mg(2+). 284–296 (GSAPDIAGKGIAN) serves as a coordination point for NAD(+).

It belongs to the isocitrate and isopropylmalate dehydrogenases family. LeuB type 1 subfamily. In terms of assembly, homodimer. Requires Mg(2+) as cofactor. It depends on Mn(2+) as a cofactor.

The protein localises to the cytoplasm. The enzyme catalyses (2R,3S)-3-isopropylmalate + NAD(+) = 4-methyl-2-oxopentanoate + CO2 + NADH. It participates in amino-acid biosynthesis; L-leucine biosynthesis; L-leucine from 3-methyl-2-oxobutanoate: step 3/4. Catalyzes the oxidation of 3-carboxy-2-hydroxy-4-methylpentanoate (3-isopropylmalate) to 3-carboxy-4-methyl-2-oxopentanoate. The product decarboxylates to 4-methyl-2 oxopentanoate. This is 3-isopropylmalate dehydrogenase from Mannheimia succiniciproducens (strain KCTC 0769BP / MBEL55E).